Reading from the N-terminus, the 606-residue chain is Endonuclease 8-like 3 (606 aa).

Catalysis depends on V2, which acts as the Schiff-base intermediate with DNA; via amino nitrogen. The DNA site is built by N193 and R272. The FPG-type zinc finger occupies 248 to 282 (KVYKRPNCDQCHSKITVCRFGENSRMTYFCPHCQK). The RanBP2-type zinc-finger motif lies at 318–347 (SEEQWSCVVCTLINRPSAKACDACLTTRPL). S451 carries the post-translational modification Phosphoserine. Residues 479-494 (KSYNSGLSNSELQTNR) are compositionally biased toward polar residues. The interval 479–506 (KSYNSGLSNSELQTNRTRGHHSKSDGSP) is disordered. Zn(2+) contacts are provided by C508, H511, C534, C542, C555, H557, C580, and C588. 2 GRF-type zinc fingers span residues 508–551 (CKMH…ADLS) and 555–597 (CRHG…AENG).

This sequence belongs to the FPG family. Expressed in testis, thymus, spleen and bone marrow. In young mice, expressed at higher levels in thymocytes than splenocytes. At 12 dpc, abundant in the subventricular zone (SVZ) of the lateral ventricles. At 17.5 dpc and P0, expression is limited to distinct cells in the cortical SVZ, in cells of the secondary matrix, the dentate gyrus migratory route and the dentate gyrus.

The protein resides in the nucleus. Its subcellular location is the chromosome. The enzyme catalyses 2'-deoxyribonucleotide-(2'-deoxyribose 5'-phosphate)-2'-deoxyribonucleotide-DNA = a 3'-end 2'-deoxyribonucleotide-(2,3-dehydro-2,3-deoxyribose 5'-phosphate)-DNA + a 5'-end 5'-phospho-2'-deoxyribonucleoside-DNA + H(+). Functionally, DNA glycosylase which prefers single-stranded DNA (ssDNA), or partially ssDNA structures such as bubble and fork structures, to double-stranded DNA (dsDNA). Mediates interstrand cross-link repair in response to replication stress: acts by mediating DNA glycosylase activity, cleaving one of the two N-glycosyl bonds comprising the interstrand cross-link, which avoids the formation of a double-strand break but generates an abasic site that is bypassed by translesion synthesis polymerases. In vitro, displays strong glycosylase activity towards the hydantoin lesions spiroiminodihydantoin (Sp) and guanidinohydantoin (Gh) in both ssDNA and dsDNA; also recognizes FapyA, FapyG, 5-OHU, 5-OHC, 5-OHMH, Tg and 8-oxoA lesions in ssDNA. No activity on 8-oxoG detected. Also shows weak DNA-(apurinic or apyrimidinic site) lyase activity. In vivo, appears to be the primary enzyme involved in removing Sp and Gh from ssDNA in neonatal tissues. This is Endonuclease 8-like 3 (Neil3) from Mus musculus (Mouse).